The chain runs to 255 residues: MPKETLVVSKSEELAFEYFLSFNKFSSGSSSFLGQVTKASFFSSLASSGSKSSLNSLNNEFDHLSLYEIKNSSLETEKYKTILVVCDNTDEFYGEKGLSNLTLFHNSLLPNGKFVIAIPPNSSHEQEIKKEMMYSGLIDVVSSVYYFTTFITGVRPNWKSKTDKKSPSMIDAAPIDGYISKAPDYESCSTKPRACANCTCGRAEREKLNSTDLTSDVDAPTSSCGNCYLGDAFRCESCPYKGLPAFKPGEKVILD.

Residues 1–163 (MPKETLVVSK…VRPNWKSKTD (163 aa)) are N-terminal SAM-like domain. The linker stretch occupies residues 164-185 (KKSPSMIDAAPIDGYISKAPDY). [2Fe-2S] cluster is bound by residues Cys188, Cys195, Cys198, and Cys200. The segment at 188–200 (CSTKPRACANCTC) is fe-S binding site A. [4Fe-4S] cluster is bound by residues Cys224, Cys227, Cys235, and Cys238. Short sequence motifs (cx2C motif) lie at residues 224–227 (CGNC) and 235–238 (CESC). The segment at 224–238 (CGNCYLGDAFRCESC) is fe-S binding site B.

This sequence belongs to the anamorsin family. Monomer. It depends on [2Fe-2S] cluster as a cofactor. The cofactor is [4Fe-4S] cluster.

The protein resides in the cytoplasm. It is found in the mitochondrion intermembrane space. Its function is as follows. Component of the cytosolic iron-sulfur (Fe-S) protein assembly (CIA) machinery. Required for the maturation of extramitochondrial Fe-S proteins. Part of an electron transfer chain functioning in an early step of cytosolic Fe-S biogenesis, facilitating the de novo assembly of a [4Fe-4S] cluster on the cytosolic Fe-S scaffold complex. Electrons are transferred from NADPH via a FAD- and FMN-containing diflavin oxidoreductase. Together with the diflavin oxidoreductase, also required for the assembly of the diferric tyrosyl radical cofactor of ribonucleotide reductase (RNR), probably by providing electrons for reduction during radical cofactor maturation in the catalytic small subunit. The sequence is that of Anamorsin homolog from Theileria annulata.